Consider the following 330-residue polypeptide: MSRVFSGIQPTGDPHIGNYFGAMQNYVRLGEQYGKQSLYCVVDLHAITNPGAFDPQTLAQKTFDMAVANFAIGLDPSKVVFFVQSHVPEHQELSWIFTCVTPVGELERMTQYKDKSAQFESVPSGLLMYPALMAADILLYKADIVPVGEDQTQHIELTREIARKFNHNFGETFTEPKAVYNKEALRIPGVDGQGKMSKSKGNTIGILEPFGDIWQKLRVAPTDPARVRRTDPGDPDKCLIGDYHKLFSPPETLETVYQGCRTAGIGCVDCKKMLMTHITEHLDPIQTRAAQLRADPDYVRDALRQGDQEARAIASEVMDEVRQKVGFLKL.

ATP contacts are provided by residues 9-11 (QPT) and 17-18 (GN). Positions 10-18 (PTGDPHIGN) match the 'HIGH' region motif. Position 136 (aspartate 136) interacts with L-tryptophan. ATP is bound by residues 148 to 150 (GED), isoleucine 187, and 195 to 199 (KMSKS). The 'KMSKS' region signature appears at 195–199 (KMSKS).

Belongs to the class-I aminoacyl-tRNA synthetase family. As to quaternary structure, homodimer.

It localises to the cytoplasm. The catalysed reaction is tRNA(Trp) + L-tryptophan + ATP = L-tryptophyl-tRNA(Trp) + AMP + diphosphate + H(+). Its function is as follows. Catalyzes the attachment of tryptophan to tRNA(Trp). This chain is Tryptophan--tRNA ligase, found in Deinococcus radiodurans (strain ATCC 13939 / DSM 20539 / JCM 16871 / CCUG 27074 / LMG 4051 / NBRC 15346 / NCIMB 9279 / VKM B-1422 / R1).